The chain runs to 462 residues: MIVTRFAPSPTGYLHIGGLRTALFSYLWARKNGGKFLLRIEDTDKARNSQEAAEAIVKAFNWLGLEHDGEITYQSQRDDIYAIYVKQLLDEGKAYRCYMSREELDALRETQMANKERTKYDGKYRDFDGTPPDGVDSVIRIKAPLSGEIIVRDGVKGDVVFKAEDILDDFVIARADGSPTYNFVVAIDDHLMGVTEVIRGDDHLSNTPKQIVIYEALGFDVPKFYHVPMIHNSEGKKLSKRDGATDVMAYKEMGYTPAALLNFLVRLGWSNGDQEIFSMDEMRELFDPKNINRSASIYNTEKLDWLNSHYIKNTPNQELAKMLEEYNLTIASHDKKEILLDALKERAKTLKELALLVTEVINPPASYDEKALEKSLKGEAVEVLNNFIAKLSACKELHLPSEYHHVMQEVVDEMGIGFGKIGQPLRVALLGKMSGPGLDSVMAVIGIDETILRVKSALALVK.

The short motif at 8-18 (PSPTGYLHIGG) is the 'HIGH' region element. The 'KMSKS' region signature appears at 237 to 241 (KLSKR). Lysine 240 contributes to the ATP binding site.

Belongs to the class-I aminoacyl-tRNA synthetase family. Glutamate--tRNA ligase type 1 subfamily. As to quaternary structure, monomer.

It localises to the cytoplasm. It catalyses the reaction tRNA(Glu) + L-glutamate + ATP = L-glutamyl-tRNA(Glu) + AMP + diphosphate. In terms of biological role, catalyzes the attachment of glutamate to tRNA(Glu) in a two-step reaction: glutamate is first activated by ATP to form Glu-AMP and then transferred to the acceptor end of tRNA(Glu). The protein is Glutamate--tRNA ligase 1 of Sulfurimonas denitrificans (strain ATCC 33889 / DSM 1251) (Thiomicrospira denitrificans (strain ATCC 33889 / DSM 1251)).